Reading from the N-terminus, the 271-residue chain is Probable iron transport system membrane protein HI_0359 (271 aa).

The next 8 helical transmembrane spans lie at 17–37 (ALLT…YLVL), 55–75 (IVLA…SGIF), 93–113 (TAMG…FTKI), 131–151 (SHQE…LIVF), 168–188 (VAGL…ALTI), 194–214 (VVGV…ALTL), 221–241 (MLWV…ILSY), and 245–265 (ASTG…ALAY).

It belongs to the ABC-3 integral membrane protein family.

The protein resides in the cell inner membrane. Its function is as follows. Part of an ATP-driven transport system HI_0359/HI_0360/HI_0361/HI_0362 for iron. The polypeptide is Probable iron transport system membrane protein HI_0359 (Haemophilus influenzae (strain ATCC 51907 / DSM 11121 / KW20 / Rd)).